We begin with the raw amino-acid sequence, 208 residues long: Large ribosomal subunit protein uL4 (208 aa).

Positions 58 to 77 (RGGGRKPWRQKGTGRARQGS) are disordered. The span at 60–71 (GGRKPWRQKGTG) shows a compositional bias: basic residues.

This sequence belongs to the universal ribosomal protein uL4 family. As to quaternary structure, part of the 50S ribosomal subunit.

Functionally, one of the primary rRNA binding proteins, this protein initially binds near the 5'-end of the 23S rRNA. It is important during the early stages of 50S assembly. It makes multiple contacts with different domains of the 23S rRNA in the assembled 50S subunit and ribosome. Its function is as follows. Forms part of the polypeptide exit tunnel. The chain is Large ribosomal subunit protein uL4 from Caldicellulosiruptor bescii (strain ATCC BAA-1888 / DSM 6725 / KCTC 15123 / Z-1320) (Anaerocellum thermophilum).